A 146-amino-acid chain; its full sequence is uncharacterized protein (146 aa).

A signal peptide spans Met1–Ala17. Disordered stretches follow at residues Asn27 to Leu54 and Glu70 to Pro146. Over residues Gln32 to Leu54 the composition is skewed to low complexity. Positions Ser77–His118 are enriched in polar residues.

This is an uncharacterized protein from Escherichia coli (strain K12).